Reading from the N-terminus, the 214-residue chain is MTTLADLRINYSRASLDEADVAPDPFAQFDRWFKEALAAKLPEPNTMTLATVGENGRPSARIVLIKGVDERGFVFFTNYESRKGRDLAAHPYAALLFYWIELERQVRIEGRIEKTSTDESDRYFASRPLGSRIGAWASEQSAVIDSRATLEAREKAVAERYGENPPRPPQWGGYRVVPDAIEFWQGRPSRLHDRLLYTRDAAAAPDWTISRLSP.

Substrate contacts are provided by residues 8 to 11 and lysine 66; that span reads RINY. FMN-binding positions include 61–66, 76–77, arginine 82, lysine 83, and glutamine 105; these read RIVLIK and FT. The substrate site is built by tyrosine 123, arginine 127, and serine 131. FMN-binding positions include 140–141 and tryptophan 184; that span reads QS. 190-192 is a substrate binding site; the sequence is RLH. Arginine 194 serves as a coordination point for FMN.

It belongs to the pyridoxamine 5'-phosphate oxidase family. In terms of assembly, homodimer. FMN is required as a cofactor.

It catalyses the reaction pyridoxamine 5'-phosphate + O2 + H2O = pyridoxal 5'-phosphate + H2O2 + NH4(+). The catalysed reaction is pyridoxine 5'-phosphate + O2 = pyridoxal 5'-phosphate + H2O2. It functions in the pathway cofactor metabolism; pyridoxal 5'-phosphate salvage; pyridoxal 5'-phosphate from pyridoxamine 5'-phosphate: step 1/1. It participates in cofactor metabolism; pyridoxal 5'-phosphate salvage; pyridoxal 5'-phosphate from pyridoxine 5'-phosphate: step 1/1. Functionally, catalyzes the oxidation of either pyridoxine 5'-phosphate (PNP) or pyridoxamine 5'-phosphate (PMP) into pyridoxal 5'-phosphate (PLP). The sequence is that of Pyridoxine/pyridoxamine 5'-phosphate oxidase from Burkholderia ambifaria (strain ATCC BAA-244 / DSM 16087 / CCUG 44356 / LMG 19182 / AMMD) (Burkholderia cepacia (strain AMMD)).